The primary structure comprises 391 residues: Trehalose-phosphate phosphatase (391 aa).

Aspartate 147 functions as the Nucleophile in the catalytic mechanism. Residues aspartate 147, aspartate 149, and aspartate 330 each contribute to the Mg(2+) site. Substrate is bound at residue 147–149 (DFD).

This sequence belongs to the trehalose phosphatase family. The cofactor is Mg(2+).

The enzyme catalyses alpha,alpha-trehalose 6-phosphate + H2O = alpha,alpha-trehalose + phosphate. It participates in glycan biosynthesis; trehalose biosynthesis. Its function is as follows. Removes the phosphate from trehalose 6-phosphate to produce free trehalose. The protein is Trehalose-phosphate phosphatase (otsB) of Mycobacterium avium (strain 104).